The primary structure comprises 276 residues: 3-methyl-2-oxobutanoate hydroxymethyltransferase (276 aa).

The Mg(2+) site is built by Asp-44 and Asp-83. 3-methyl-2-oxobutanoate-binding positions include 44-45 (DS), Asp-83, and Lys-113. Glu-115 is a binding site for Mg(2+). The Proton acceptor role is filled by Glu-182.

It belongs to the PanB family. As to quaternary structure, homodecamer; pentamer of dimers. It depends on Mg(2+) as a cofactor.

The protein resides in the cytoplasm. The enzyme catalyses 3-methyl-2-oxobutanoate + (6R)-5,10-methylene-5,6,7,8-tetrahydrofolate + H2O = 2-dehydropantoate + (6S)-5,6,7,8-tetrahydrofolate. It participates in cofactor biosynthesis; (R)-pantothenate biosynthesis; (R)-pantoate from 3-methyl-2-oxobutanoate: step 1/2. In terms of biological role, catalyzes the reversible reaction in which hydroxymethyl group from 5,10-methylenetetrahydrofolate is transferred onto alpha-ketoisovalerate to form ketopantoate. The sequence is that of 3-methyl-2-oxobutanoate hydroxymethyltransferase from Clostridium acetobutylicum (strain ATCC 824 / DSM 792 / JCM 1419 / IAM 19013 / LMG 5710 / NBRC 13948 / NRRL B-527 / VKM B-1787 / 2291 / W).